Here is a 147-residue protein sequence, read N- to C-terminus: 3-hydroxyacyl-[acyl-carrier-protein] dehydratase FabZ (147 aa).

Residue His50 is part of the active site.

This sequence belongs to the thioester dehydratase family. FabZ subfamily.

The protein resides in the cytoplasm. The catalysed reaction is a (3R)-hydroxyacyl-[ACP] = a (2E)-enoyl-[ACP] + H2O. Involved in unsaturated fatty acids biosynthesis. Catalyzes the dehydration of short chain beta-hydroxyacyl-ACPs and long chain saturated and unsaturated beta-hydroxyacyl-ACPs. The sequence is that of 3-hydroxyacyl-[acyl-carrier-protein] dehydratase FabZ from Lactiplantibacillus plantarum (strain ATCC BAA-793 / NCIMB 8826 / WCFS1) (Lactobacillus plantarum).